We begin with the raw amino-acid sequence, 402 residues long: Deoxyguanosinetriphosphate triphosphohydrolase-like protein (402 aa).

Residues 20-39 form a disordered region; sequence PAFSRGRLVPEPESPTRTPF. One can recognise an HD domain in the interval 73–217; sequence RLTHTIEVAQ…AAIADDIAYN (145 aa).

It belongs to the dGTPase family. Type 2 subfamily.

The sequence is that of Deoxyguanosinetriphosphate triphosphohydrolase-like protein from Brucella canis (strain ATCC 23365 / NCTC 10854 / RM-666).